A 611-amino-acid chain; its full sequence is Fatty acid photodecarboxylase, chloroplastic (611 aa).

A disordered region spans residues 1 to 22; that stretch reads MMLGPKTVTRGATKGAAPRSMA. A chloroplast-targeting transit peptide spans 1–36; the sequence is MMLGPKTVTRGATKGAAPRSMAARRVGGARRLSVRA. FAD-binding positions include 55–56, glutamate 76, methionine 125, serine 129, and 133–136; these read TA and NATL. The hexadecanoate site is built by cysteine 392, arginine 412, tyrosine 427, and glutamine 447. Glycine 582 contacts FAD.

The protein belongs to the GMC oxidoreductase family. It depends on FAD as a cofactor.

Its subcellular location is the plastid. It is found in the chloroplast. The catalysed reaction is a long-chain fatty acid + hnu + H(+) = a long-chain alkane + CO2. It catalyses the reaction hnu + hexadecanoate + H(+) = pentadecane + CO2. Its activity is regulated as follows. Activated by blue light and repressed by red light. Catalyzes the decarboxylation of free fatty acids to n-alkanes or n-alkenes in response to blue light. Substrate preference is toward fatty acids with C17 or C18 chains. Saturated fatty acids are converted to alkanes, not alkenes. The decarboxylation is initiated through electron abstraction from the fatty acid by the photo-excited FAD. The sequence is that of Fatty acid photodecarboxylase, chloroplastic from Chlamydomonas reinhardtii (Chlamydomonas smithii).